The sequence spans 436 residues: Aminopeptidase C (436 aa).

Residues cysteine 68, histidine 356, and asparagine 378 contribute to the active site.

It belongs to the peptidase C1 family. As to quaternary structure, homohexamer.

It carries out the reaction Inactivates bleomycin B2 (a cytotoxic glycometallopeptide) by hydrolysis of a carboxyamide bond of beta-aminoalanine, but also shows general aminopeptidase activity. The specificity varies somewhat with source, but amino acid arylamides of Met, Leu and Ala are preferred.. Functionally, hydrolyzes naphthylamide-substituted amino acids as well as di- and tripeptides in which the half-cystine residue is involved in a disulfide loop, notably in oxytocin and vasopressin. Also has a bleomycin hydrolase activity. In Lactococcus lactis subsp. cremoris (Streptococcus cremoris), this protein is Aminopeptidase C (pepC).